The primary structure comprises 438 residues: Histidinol dehydrogenase (438 aa).

Residues Tyr138, Gln199, and Asn222 each contribute to the NAD(+) site. Substrate contacts are provided by Ser245, Gln267, and His270. Zn(2+) contacts are provided by Gln267 and His270. Residues Glu335 and His336 each act as proton acceptor in the active site. Substrate-binding residues include His336, Asp369, Glu423, and His428. Asp369 lines the Zn(2+) pocket. His428 is a binding site for Zn(2+).

The protein belongs to the histidinol dehydrogenase family. It depends on Zn(2+) as a cofactor.

The enzyme catalyses L-histidinol + 2 NAD(+) + H2O = L-histidine + 2 NADH + 3 H(+). The protein operates within amino-acid biosynthesis; L-histidine biosynthesis; L-histidine from 5-phospho-alpha-D-ribose 1-diphosphate: step 9/9. Catalyzes the sequential NAD-dependent oxidations of L-histidinol to L-histidinaldehyde and then to L-histidine. This chain is Histidinol dehydrogenase, found in Burkholderia lata (strain ATCC 17760 / DSM 23089 / LMG 22485 / NCIMB 9086 / R18194 / 383).